The chain runs to 211 residues: MDAVILNLLGDIPLVTRLWTIGCLVLSGLTSLRIVDPGKVVYSYDLVFKKGQYGRLLYSIFDYGAFNWISMINIFVSANHLSTLENSFNLRRKFCWIIFLLLVILVKMTSIEQPAASLGVLLHENLVYYELKKNGNQMNVRFFGAIDVSPSIFPIYMNAVMYFVYKRSWLEIAMNFMPGHVIYYMDDIIGKIYGIDLCKSPYDWFRNTETP.

Residue Met1 is modified to N-acetylmethionine. The Cytoplasmic portion of the chain corresponds to 1–14 (MDAVILNLLGDIPL). A helical membrane pass occupies residues 15–32 (VTRLWTIGCLVLSGLTSL). Residues 33–67 (RIVDPGKVVYSYDLVFKKGQYGRLLYSIFDYGAFN) lie on the Lumenal side of the membrane. A helical membrane pass occupies residues 68 to 85 (WISMINIFVSANHLSTLE). The Cytoplasmic portion of the chain corresponds to 86–92 (NSFNLRR). A helical transmembrane segment spans residues 93–109 (KFCWIIFLLLVILVKMT). Residues 110-117 (SIEQPAAS) are Lumenal-facing. The helical transmembrane segment at 118–133 (LGVLLHENLVYYELKK) threads the bilayer. Over 134-149 (NGNQMNVRFFGAIDVS) the chain is Cytoplasmic. A helical transmembrane segment spans residues 150-165 (PSIFPIYMNAVMYFVY). The Lumenal segment spans residues 166–168 (KRS). Residues 169 to 189 (WLEIAMNFMPGHVIYYMDDII) traverse the membrane as a helical segment. The Cytoplasmic portion of the chain corresponds to 190 to 211 (GKIYGIDLCKSPYDWFRNTETP).

It belongs to the derlin family. As to quaternary structure, component of the HRD1 ubiquitin ligase complex which contains the E3 ligase HRD1, its cofactors HRD3, USA1 and DER1, substrate recruiting factor YOS9 and CDC48-binding protein UBX2. Within the complex, interacts with USA1 (via C-terminus). In ERAD-L, HRD3 and YOS9 jointly bind misfolded glycoproteins in the endoplasmic reticulum (ER) lumen. Movement of ERAD-L substrates through the ER membrane is facilitated by HRD1 and DER1 which have lateral gates facing each other and which distort the membrane region between the lateral gates, making it much thinner than a normal phospholipid bilayer. Substrates insert into the membrane as a hairpin loop with one strand interacting with DER1 and the other with HRD1. The HRD1 complex interacts with the heterotrimeric CDC48-NPL4-UFD1 ATPase complex which is recruited by UBX2 via its interaction with CDC48 and which moves ubiquitinated substrates to the cytosol for targeting to the proteasome. N-terminally acetylated by acetyltransferase NatB which enhances DER1 stability and is required for ERAD-L function.

It localises to the endoplasmic reticulum membrane. In terms of biological role, component of the endoplasmic reticulum-associated degradation (ERAD) pathway. Specifically required for the ERAD-L pathway which mediates the degradation of proteins with misfolded lumenal domains within the endoplasmic reticulum (ER). Facilitates retrotranslocation of misfolded proteins from the ER lumen through the ER membrane in conjunction with HRD1. Both proteins have lateral gates facing each other and distort the membrane region between the lateral gates, making it much thinner than a normal phospholipid bilayer. Substrates insert into the membrane as a hairpin loop with one strand interacting with DER1 and the other with HRD1. The chain is Degradation in the endoplasmic reticulum protein 1 (DER1) from Saccharomyces cerevisiae (strain ATCC 204508 / S288c) (Baker's yeast).